We begin with the raw amino-acid sequence, 99 residues long: Small ribosomal subunit protein eS24 (99 aa).

Belongs to the eukaryotic ribosomal protein eS24 family.

This Pyrococcus horikoshii (strain ATCC 700860 / DSM 12428 / JCM 9974 / NBRC 100139 / OT-3) protein is Small ribosomal subunit protein eS24.